A 107-amino-acid chain; its full sequence is Urease subunit beta (107 aa).

It belongs to the urease beta subunit family. As to quaternary structure, heterotrimer of UreA (gamma), UreB (beta) and UreC (alpha) subunits. Three heterotrimers associate to form the active enzyme.

It is found in the cytoplasm. It catalyses the reaction urea + 2 H2O + H(+) = hydrogencarbonate + 2 NH4(+). It participates in nitrogen metabolism; urea degradation; CO(2) and NH(3) from urea (urease route): step 1/1. This chain is Urease subunit beta, found in Escherichia coli.